The chain runs to 782 residues: Protein phosphatase 1 regulatory subunit 12C (782 aa).

Low complexity-rich tracts occupy residues 1–19 and 77–88; these read MSGE…AAAA and DPGPGSGAASDP. 2 disordered regions span residues 1–45 and 77–98; these read MSGE…GERR and DPGP…RAVL. Serine 2 is subject to N-acetylserine. ANK repeat units lie at residues 104-133, 137-166, 230-259, and 263-292; these read DGIS…TVNQ, EGWT…NIAA, TGAS…DTEL, and DGWT…GMDS. Residues 301 to 332 adopt a coiled-coil conformation; sequence CDLADEDVMNLLEELAQKQEDLRNQKEGSQGR. The disordered stretch occupies residues 321 to 685; sequence DLRNQKEGSQ…HEEPDGGFRK (365 aa). Positions 332–341 are enriched in polar residues; sequence RGQESQVPSS. The span at 353–369 shows a compositional bias: basic and acidic residues; sequence SSREKISLQDLSKERRP. Residues 401-413 are compositionally biased toward low complexity; that stretch reads VSSPVSSNPKSPV. A phosphoserine mark is found at serine 403, serine 411, serine 431, serine 454, and serine 509. A compositionally biased stretch (polar residues) spans 451–465; it reads RSASSSLLEKASTQA. Over residues 537–546 the composition is skewed to basic and acidic residues; that stretch reads VRDEESESQR. Positions 547–557 are enriched in basic residues; the sequence is KARSRLMRQSR. The residue at position 560 (threonine 560) is a Phosphothreonine. The residue at position 647 (serine 647) is a Phosphoserine. Residues 664–685 show a composition bias toward basic and acidic residues; that stretch reads SQRDLVLESKQEHEEPDGGFRK. Residues 681–782 are a coiled coil; the sequence is GGFRKMYTEL…LIRVISKLSK (102 aa).

PP1 comprises a catalytic subunit, PPP1CA, PPP1CB or PPP1CC, and one or several targeting or regulatory subunits. PPP1R12C mediates binding to myosin. Interacts via its N-terminus with PPP1CB. Interacts with IL16. Interacts with the coiled-coil domain of MPRIP. Interacts with NOD2. Post-translationally, phosphorylation at Thr-560 is essential for its interaction with PPP1CB.

Its subcellular location is the cytoplasm. The protein resides in the cytoskeleton. It is found in the stress fiber. In terms of biological role, regulates myosin phosphatase activity. The polypeptide is Protein phosphatase 1 regulatory subunit 12C (Mus musculus (Mouse)).